We begin with the raw amino-acid sequence, 262 residues long: Indole-3-glycerol phosphate synthase (262 aa).

Belongs to the TrpC family.

It carries out the reaction 1-(2-carboxyphenylamino)-1-deoxy-D-ribulose 5-phosphate + H(+) = (1S,2R)-1-C-(indol-3-yl)glycerol 3-phosphate + CO2 + H2O. It participates in amino-acid biosynthesis; L-tryptophan biosynthesis; L-tryptophan from chorismate: step 4/5. The sequence is that of Indole-3-glycerol phosphate synthase from Staphylococcus epidermidis (strain ATCC 35984 / DSM 28319 / BCRC 17069 / CCUG 31568 / BM 3577 / RP62A).